A 439-amino-acid chain; its full sequence is Trigger factor (439 aa).

The 86-residue stretch at Gly-162–Pro-247 folds into the PPIase FKBP-type domain.

Belongs to the FKBP-type PPIase family. Tig subfamily.

It localises to the cytoplasm. The enzyme catalyses [protein]-peptidylproline (omega=180) = [protein]-peptidylproline (omega=0). Involved in protein export. Acts as a chaperone by maintaining the newly synthesized protein in an open conformation. Functions as a peptidyl-prolyl cis-trans isomerase. The chain is Trigger factor from Lactobacillus delbrueckii subsp. bulgaricus (strain ATCC 11842 / DSM 20081 / BCRC 10696 / JCM 1002 / NBRC 13953 / NCIMB 11778 / NCTC 12712 / WDCM 00102 / Lb 14).